The sequence spans 730 residues: Semaphorin-1A (730 aa).

Positions methionine 1–alanine 20 are cleaved as a signal peptide. The Extracellular segment spans residues tryptophan 21–threonine 630. The 463-residue stretch at lysine 28–leucine 490 folds into the Sema domain. N-linked (GlcNAc...) asparagine glycans are attached at residues asparagine 44 and asparagine 71. Disulfide bonds link cysteine 97/cysteine 107 and cysteine 125/cysteine 134. N-linked (GlcNAc...) asparagine glycans are attached at residues asparagine 163 and asparagine 267. Disulfide bonds link cysteine 244–cysteine 358 and cysteine 268–cysteine 317. A glycan (N-linked (GlcNAc...) asparagine) is linked at asparagine 360. Disulfide bonds link cysteine 493/cysteine 512 and cysteine 504/cysteine 521. N-linked (GlcNAc...) asparagine glycosylation is present at asparagine 539. The chain crosses the membrane as a helical span at residues isoleucine 631–phenylalanine 651. Residues serine 652–isoleucine 730 are Cytoplasmic-facing. A compositionally biased stretch (low complexity) spans alanine 708–lysine 720. The disordered stretch occupies residues alanine 708 to isoleucine 730.

Belongs to the semaphorin family. Dynamically expressed on a subset of axon pathways in the developing CNS and on circumferential bands of epithelial cells in developing limb buds.

The protein localises to the membrane. In terms of biological role, plays a role in growth cones guidance. This Schistocerca americana (American grasshopper) protein is Semaphorin-1A (SEMA-1A).